The primary structure comprises 90 residues: Small ribosomal subunit protein uS15 (90 aa).

Belongs to the universal ribosomal protein uS15 family. As to quaternary structure, part of the 30S ribosomal subunit. Forms a bridge to the 50S subunit in the 70S ribosome, contacting the 23S rRNA.

Its function is as follows. One of the primary rRNA binding proteins, it binds directly to 16S rRNA where it helps nucleate assembly of the platform of the 30S subunit by binding and bridging several RNA helices of the 16S rRNA. Functionally, forms an intersubunit bridge (bridge B4) with the 23S rRNA of the 50S subunit in the ribosome. The polypeptide is Small ribosomal subunit protein uS15 (Wolbachia pipientis subsp. Culex pipiens (strain wPip)).